The sequence spans 37 residues: VGIPVSCKHSGQCIKPCKDAGMRFGKCMNRKCDCTPK.

Intrachain disulfides connect C7–C27, C13–C32, and C17–C34. An interaction with Ca(2+)-activated K(+) channels region spans residues 25-32; it reads GKCMNRKC.

This sequence belongs to the short scorpion toxin superfamily. Potassium channel inhibitor family. Alpha-KTx 03 subfamily. Expressed by the venom gland.

It localises to the secreted. Binds and inhibits potassium channels. Intracerebroventricular injection into mice induces paralyzing symptoms followed by death. Its binding affinity to rat brain synaptosomes is 5-fold lower than this of KTX 1. The sequence is that of Potassium channel toxin alpha-KTx 3.9 (KTX3) from Buthus occitanus tunetanus (Common European scorpion).